The chain runs to 121 residues: UPF0344 protein BT9727_1053 (121 aa).

The next 4 helical transmembrane spans lie at 6–26, 38–58, 65–85, and 92–112; these read ITAW…YSAG, LMYI…MKTA, WYGL…MVLV, and ATGA…YLGL.

It belongs to the UPF0344 family.

The protein localises to the cell membrane. The protein is UPF0344 protein BT9727_1053 of Bacillus thuringiensis subsp. konkukian (strain 97-27).